The following is a 593-amino-acid chain: Acetyl-coenzyme A transferase nodX (593 aa).

The disordered stretch occupies residues 572–593 (DEDEQGSGFRSGSGLGSGSIAD). Residues 580 to 593 (FRSGSGLGSGSIAD) are compositionally biased toward gly residues.

The protein belongs to the CoA-transferase III family.

The protein operates within secondary metabolite biosynthesis. Functionally, acetyl-coenzyme A transferase; part of the gene cluster that mediates the biosynthesis of the indole diterpenes nodulisporic acids (NA). Nodulisporic acid A (NAA) and its chemically modified derivatives are of particular significance because of their highly potent insecticidal activity against blood-feeding arthropods and lack of observable adverse effects on mammals, in particular the tremogenicity associated with the paspaline-derived IDTs is not observed. The geranylgeranyl diphosphate (GGPP) synthase ggs1, localized outside of the cluster, is proposed to catalyze the first step in nodulisporic acid biosynthesis via conversion of farnesyl pyrophosphate and isopentyl pyrophosphate into geranylgeranyl pyrophosphate (GGPP). Condensation of indole-3-glycerol phosphate with GGPP by the prenyl transferase nodC then forms 3-geranylgeranylindole (3-GGI). Epoxidation by the FAD-dependent monooxygenase nodM leads to a single-epoxidized-GGI that is substrate of the terpene cyclase nodB for cyclization to yield emindole SB. The terminal methyl carbon, C28, of emindole SB is then oxidized by the cytochrome P450 monooxygenase nodW to produce nodulisporic acid F (NAF), the pentacyclic core of NAA. NAF is converted to nodulisporic acid E (NAE) via prenylation. This step is probably performed by one of the indole diterpene prenyltransferases nodD1 or nodD2. Several oxidation steps performed by the FAD-linked oxidoreductase nodO and one of the cytochrome P450 monooxygenase nodR, nodX or nodZ further convert NAE to nodulisporic acid D (NAD). NAD is substrate of cytochrome P450 monooxygenase nodJ to produce the precursor of nodulisporic acid C (NAC), converted to NAC by one of the indole diterpene prenyltransferases nodD1 or nodD2. The FAD-dependent monooxygenase nodY2 then oxidizes NAC to nodulisporic acid B (NAB). Finally NAB is converted to NAA by one of the cytochrome P450 monooxygenases nodR, nodX or nodZ. The sequence is that of Acetyl-coenzyme A transferase nodX from Hypoxylon pulicicidum.